The chain runs to 119 residues: Type II secretion system protein I (119 aa).

The propeptide at Met1–Gly5 is leader sequence. Met6 carries the post-translational modification N-methylmethionine. The helical transmembrane segment at Met6–Met26 threads the bilayer.

The protein belongs to the GSP I family. As to quaternary structure, type II secretion is composed of four main components: the outer membrane complex, the inner membrane complex, the cytoplasmic secretion ATPase and the periplasm-spanning pseudopilus. Interacts with core component ExeG. Cleaved by prepilin peptidase. In terms of processing, methylated by prepilin peptidase at the amino group of the N-terminal methionine once the leader sequence is cleaved by prepilin peptidase.

Its subcellular location is the cell inner membrane. Component of the type II secretion system required for the energy-dependent secretion of extracellular factors such as proteases and toxins from the periplasm. Part of the pseudopilus tip complex that is critical for the recognition and binding of secretion substrates. The sequence is that of Type II secretion system protein I (exeI) from Aeromonas hydrophila.